Consider the following 253-residue polypeptide: Chitooligosaccharide deacetylase (253 aa).

Mg(2+)-binding residues include His61 and His126.

It belongs to the YdjC deacetylase family. ChbG subfamily. As to quaternary structure, homodimer. Mg(2+) is required as a cofactor.

The protein localises to the cytoplasm. It carries out the reaction N,N'-diacetylchitobiose + H2O = N-acetyl-beta-D-glucosaminyl-(1-&gt;4)-D-glucosamine + acetate. It catalyses the reaction diacetylchitobiose-6'-phosphate + H2O = N'-monoacetylchitobiose-6'-phosphate + acetate. It functions in the pathway glycan degradation; chitin degradation. Its function is as follows. Involved in the degradation of chitin. ChbG is essential for growth on the acetylated chitooligosaccharides chitobiose and chitotriose but is dispensable for growth on cellobiose and chitosan dimer, the deacetylated form of chitobiose. Deacetylation of chitobiose-6-P and chitotriose-6-P is necessary for both the activation of the chb promoter by the regulatory protein ChbR and the hydrolysis of phosphorylated beta-glucosides by the phospho-beta-glucosidase ChbF. Catalyzes the removal of only one acetyl group from chitobiose-6-P to yield monoacetylchitobiose-6-P, the inducer of ChbR and the substrate of ChbF. The protein is Chitooligosaccharide deacetylase of Yersinia pseudotuberculosis serotype O:1b (strain IP 31758).